The sequence spans 539 residues: F-box/WD-40 repeat-containing protein At5g21040 (539 aa).

The 47-residue stretch at 65–111 (STTIIDLPQALISEILNCLDPKELGLVSCVSTYLHRLASEHHAWKEF) folds into the F-box domain. WD repeat units lie at residues 160-199 (GHTE…SIAA), 201-239 (KPLG…RNLF), 255-292 (GHEG…CVKT), 294-330 (RHSD…PLAI), 334-373 (AHEG…SETS), 382-419 (PHTS…KTNR), and 433-477 (PPQR…EIER). The segment at 505–539 (GRPDQCSIAAHKNPINGERNRAWHSKRRASGKAKA) is disordered. Residues 526–539 (AWHSKRRASGKAKA) are compositionally biased toward basic residues.

This Arabidopsis thaliana (Mouse-ear cress) protein is F-box/WD-40 repeat-containing protein At5g21040.